The primary structure comprises 258 residues: MMNPLIIKLGGVLLDSEEALERLFTALVNYREAHQRPLIIVHGGGCVVDELMKQLNLPVQKKNGLRVTPAEQIDIITGALAGTANKTLLAWAKKHGISSVGLFLGDGDSVKVTQLDAELGHVGLAQPGSPTLINTLLAGGYLPVVSSIGVTDEGQLMNVNADQAATALAATLGADLILLSDVSGILDGKGQRIAEMTAEKAEQLIEQGIITDGMIVKVNAALDAARALGRPVDIASWRHAEQLPALFNGTPIGTRILA.

Substrate contacts are provided by residues 44 to 45 (GG), arginine 66, and asparagine 158. Residues 181–186 (DVSGIL) and 209–211 (IIT) each bind ATP.

Belongs to the acetylglutamate kinase family. ArgB subfamily. In terms of assembly, homodimer.

The protein localises to the cytoplasm. It carries out the reaction N-acetyl-L-glutamate + ATP = N-acetyl-L-glutamyl 5-phosphate + ADP. It functions in the pathway amino-acid biosynthesis; L-arginine biosynthesis; N(2)-acetyl-L-ornithine from L-glutamate: step 2/4. Catalyzes the ATP-dependent phosphorylation of N-acetyl-L-glutamate. The chain is Acetylglutamate kinase from Klebsiella pneumoniae subsp. pneumoniae (strain ATCC 700721 / MGH 78578).